The chain runs to 465 residues: Hexokinase-4 (465 aa).

The 445-residue stretch at 10 to 454 (ATKKEKVEQI…SGRGAALVSA (445 aa)) folds into the Hexokinase domain. Residues 67-203 (EGSEVGDFLS…DFEMDVVAMV (137 aa)) are hexokinase small subdomain. Residue 78–83 (DLGGTN) coordinates ATP. Substrate contacts are provided by residues 151–152 (SF), 168–169 (TK), and 204–205 (ND). Residues 204-443 (NDTVATMISC…CEITFIESEE (240 aa)) are hexokinase large subdomain. Threonine 228 is an ATP binding site. Residues asparagine 231, glutamate 256, and glutamate 290 each coordinate substrate. ATP contacts are provided by residues 295 to 296 (GK), 332 to 336 (TRFVS), and 411 to 415 (SVYKL).

Belongs to the hexokinase family. As to quaternary structure, monomer. Interacts with MIDN; the interaction occurs preferentially at low glucose levels and results in inhibition of hexokinase activity. Interacts with GCKR; leading to sequestration in the nucleus. Expression is restricted to the liver and pancreatic islets (at protein level).

Its subcellular location is the cytoplasm. It is found in the nucleus. It localises to the mitochondrion. It carries out the reaction a D-hexose + ATP = a D-hexose 6-phosphate + ADP + H(+). It catalyses the reaction D-fructose + ATP = D-fructose 6-phosphate + ADP + H(+). The catalysed reaction is D-glucose + ATP = D-glucose 6-phosphate + ADP + H(+). The enzyme catalyses D-mannose + ATP = D-mannose 6-phosphate + ADP + H(+). Its pathway is carbohydrate metabolism; hexose metabolism. It participates in carbohydrate degradation; glycolysis; D-glyceraldehyde 3-phosphate and glycerone phosphate from D-glucose: step 1/4. Its activity is regulated as follows. Subject to allosteric regulation. Low glucose and high fructose-6-phosphate triggers association with the inhibitor GCKR followed by sequestration in the nucleus. In terms of biological role, catalyzes the phosphorylation of hexose, such as D-glucose, D-fructose and D-mannose, to hexose 6-phosphate (D-glucose 6-phosphate, D-fructose 6-phosphate and D-mannose 6-phosphate, respectively). Compared to other hexokinases, has a weak affinity for D-glucose, and is effective only when glucose is abundant. Mainly expressed in pancreatic beta cells and the liver and constitutes a rate-limiting step in glucose metabolism in these tissues. Since insulin secretion parallels glucose metabolism and the low glucose affinity of GCK ensures that it can change its enzymatic activity within the physiological range of glucose concentrations, GCK acts as a glucose sensor in the pancreatic beta cell. In pancreas, plays an important role in modulating insulin secretion. In liver, helps to facilitate the uptake and conversion of glucose by acting as an insulin-sensitive determinant of hepatic glucose usage. Required to provide D-glucose 6-phosphate for the synthesis of glycogen. Mediates the initial step of glycolysis by catalyzing phosphorylation of D-glucose to D-glucose 6-phosphate. This Rattus norvegicus (Rat) protein is Hexokinase-4.